The following is a 131-amino-acid chain: Small ribosomal subunit protein uS8 (131 aa).

Belongs to the universal ribosomal protein uS8 family. Part of the 30S ribosomal subunit. Contacts proteins S5 and S12.

In terms of biological role, one of the primary rRNA binding proteins, it binds directly to 16S rRNA central domain where it helps coordinate assembly of the platform of the 30S subunit. The sequence is that of Small ribosomal subunit protein uS8 from Thermodesulfovibrio yellowstonii (strain ATCC 51303 / DSM 11347 / YP87).